Here is a 132-residue protein sequence, read N- to C-terminus: ATP synthase epsilon chain (132 aa).

Belongs to the ATPase epsilon chain family. F-type ATPases have 2 components, CF(1) - the catalytic core - and CF(0) - the membrane proton channel. CF(1) has five subunits: alpha(3), beta(3), gamma(1), delta(1), epsilon(1). CF(0) has three main subunits: a, b and c.

Its subcellular location is the cell membrane. In terms of biological role, produces ATP from ADP in the presence of a proton gradient across the membrane. In Clostridium kluyveri (strain NBRC 12016), this protein is ATP synthase epsilon chain.